The chain runs to 429 residues: UDP-glucuronate 4-epimerase 1 (429 aa).

The next 2 helical transmembrane spans lie at 36–56 and 87–107; these read FLWA…QSFV and GISV…SLAL. 89–120 is a binding site for NAD(+); the sequence is SVLVTGATGFVGSHVSLALRKRGDGVVGLDNF. Residue Tyr-239 is the Proton acceptor of the active site.

It belongs to the NAD(P)-dependent epimerase/dehydratase family. In terms of assembly, homodimer. In root stele, leaves, siliques, flowers, pollen and stems.

The protein resides in the golgi apparatus. It is found in the golgi stack membrane. The enzyme catalyses UDP-alpha-D-glucuronate = UDP-alpha-D-galacturonate. Inhibited by UDP-Xylose. Its function is as follows. UDP-D-glucuronate 4-epimerase involved in the synthesis of the negatively charged monosaccharide that forms the backbone of pectic cell wall components. The polypeptide is UDP-glucuronate 4-epimerase 1 (GAE1) (Arabidopsis thaliana (Mouse-ear cress)).